Consider the following 252-residue polypeptide: Phosphomannomutase (252 aa).

Aspartate 13 serves as the catalytic Nucleophile. Residues aspartate 13 and aspartate 15 each contribute to the Mg(2+) site. The active-site Proton donor/acceptor is aspartate 15. The alpha-D-mannose 1-phosphate site is built by arginine 22, arginine 124, arginine 135, arginine 142, serine 180, and aspartate 182. Residues aspartate 208, tyrosine 220, and threonine 225 each contribute to the Mg(2+) site.

Belongs to the eukaryotic PMM family. As to quaternary structure, homodimer. Mg(2+) serves as cofactor. Expressed in roots, stems, leaves, flowers and immature fruits.

It localises to the cytoplasm. The enzyme catalyses alpha-D-mannose 1-phosphate = D-mannose 6-phosphate. It functions in the pathway nucleotide-sugar biosynthesis; GDP-alpha-D-mannose biosynthesis; alpha-D-mannose 1-phosphate from D-fructose 6-phosphate: step 2/2. Its function is as follows. Catalyzes the interconversion of mannose-6-phosphate to mannose-1-phosphate, the precursor for the synthesis of GDP-mannose. GDP-mannose is an essential sugar nucleotide for the synthesis of D-mannose-containing cell wall polysaccharides (galactomannans and glucomannans), glycolipids, glycoproteins and the antioxidant L-ascorbate. Can complement the yeast temperature-sensitive mutant sec53-6. The sequence is that of Phosphomannomutase from Nicotiana benthamiana.